We begin with the raw amino-acid sequence, 437 residues long: MDQRPELLSSMEYVASPDPKPGVPLRVAENVAPGAEDWLPSASGHLAWATSLETEHQTHLELSEEQRLQISKELVDLQIATHHLREQHEAEVFELRREILRLESRVLELELHGNGACQGHKVQPMANLGQHQVPPLEPPGGQQKLQEELKWLLEHHRARQQALETQVGVLSQQLQGAREEARTTGQQLASQAMVLASCKGQLRQAEAENTQLQLQLKKMNEEYAVRLQHYARETVENASSTNQAALQAFLESTLQDIRAAHRTREQQLAQAARTYRKRLADLNQRQELLLTTCRATFATAINLEPLPMHWATELSHPRENEYGRHRTLLLYPEKGSGETSKENKSQPLALDTASWAQIQQRLQDFSQDTQAELERERAQLMVRATMAEQQLSELQEYVDQHLGRYKQEILKLRKLVNIGDPQGVEAVSSPGSGGARL.

Coiled-coil stretches lie at residues H83–N114, E147–E287, and Q360–E408.

It belongs to the CCDC78 family.

It localises to the cytoplasm. Its subcellular location is the cytoskeleton. It is found in the microtubule organizing center. The protein localises to the centrosome. The protein resides in the centriole. It localises to the perinuclear region. Its subcellular location is the cell membrane. It is found in the sarcolemma. The protein localises to the sarcoplasmic reticulum. Component of the deuterosome, a structure that promotes de novo centriole amplification in multiciliated cells that can generate more than 100 centrioles. Deuterosome-mediated centriole amplification occurs in terminally differentiated multiciliated cells (G1/0) and not in S phase. Essential for centriole amplification and is required for CEP152 localization to the deuterosome. In Mus musculus (Mouse), this protein is Coiled-coil domain-containing protein 78 (Ccdc78).